We begin with the raw amino-acid sequence, 165 residues long: Phosphopantetheine adenylyltransferase (165 aa).

Serine 10 lines the substrate pocket. ATP is bound by residues 10-11 (SF) and histidine 18. Substrate is bound by residues lysine 42, threonine 79, and arginine 93. ATP contacts are provided by residues 94 to 96 (GLR), glutamate 104, and 129 to 135 (VRPITAT).

It belongs to the bacterial CoaD family. In terms of assembly, homohexamer. Requires Mg(2+) as cofactor.

Its subcellular location is the cytoplasm. It carries out the reaction (R)-4'-phosphopantetheine + ATP + H(+) = 3'-dephospho-CoA + diphosphate. The protein operates within cofactor biosynthesis; coenzyme A biosynthesis; CoA from (R)-pantothenate: step 4/5. Reversibly transfers an adenylyl group from ATP to 4'-phosphopantetheine, yielding dephospho-CoA (dPCoA) and pyrophosphate. The chain is Phosphopantetheine adenylyltransferase from Rhodopseudomonas palustris (strain BisA53).